The sequence spans 290 residues: 4-hydroxybenzoate octaprenyltransferase (290 aa).

8 consecutive transmembrane segments (helical) span residues 23–43 (IGAL…TPGM), 46–66 (LWIL…GCVV), 99–119 (LFVV…AMTI), 141–161 (LPQV…FAAV), 163–183 (ESLP…AVAY), 212–232 (TLII…IGWL), 233–253 (NGLG…FVYQ), and 268–288 (AFMN…MSYW).

It belongs to the UbiA prenyltransferase family. The cofactor is Mg(2+).

The protein localises to the cell inner membrane. The enzyme catalyses all-trans-octaprenyl diphosphate + 4-hydroxybenzoate = 4-hydroxy-3-(all-trans-octaprenyl)benzoate + diphosphate. It functions in the pathway cofactor biosynthesis; ubiquinone biosynthesis. Catalyzes the prenylation of para-hydroxybenzoate (PHB) with an all-trans polyprenyl group. Mediates the second step in the final reaction sequence of ubiquinone-8 (UQ-8) biosynthesis, which is the condensation of the polyisoprenoid side chain with PHB, generating the first membrane-bound Q intermediate 3-octaprenyl-4-hydroxybenzoate. The polypeptide is 4-hydroxybenzoate octaprenyltransferase (Salmonella paratyphi C (strain RKS4594)).